The primary structure comprises 141 residues: Large-conductance mechanosensitive channel (141 aa).

3 consecutive transmembrane segments (helical) span residues 14–34 (VVDLAVGVIIGAAFGAIVNSL), 38–58 (VIMPIIGAVTGGLDFSNYYIP), and 82–102 (GQFLTLAVNFTIIAFVLFMVI).

The protein belongs to the MscL family. As to quaternary structure, homopentamer.

Its subcellular location is the cell inner membrane. Functionally, channel that opens in response to stretch forces in the membrane lipid bilayer. May participate in the regulation of osmotic pressure changes within the cell. In Methylorubrum extorquens (strain CM4 / NCIMB 13688) (Methylobacterium extorquens), this protein is Large-conductance mechanosensitive channel.